Reading from the N-terminus, the 432-residue chain is Keratin, type I cytoskeletal 17 (432 aa).

Residues M1 to S24 form a disordered region. The head stretch occupies residues M1 to G83. 2 positions are modified to phosphoserine: S12 and S13. Residue K15 forms a Glycyl lysine isopeptide (Lys-Gly) (interchain with G-Cter in SUMO1); alternate linkage. K15 participates in a covalent cross-link: Glycyl lysine isopeptide (Lys-Gly) (interchain with G-Cter in SUMO2); alternate. S25, S32, and S39 each carry phosphoserine. S44 bears the Phosphoserine; by RPS6KA1 mark. Residues E84–Y120 are coil 1A. Residues E84 to L395 form the IF rod domain. T110 bears the Phosphothreonine mark. Positions Q121–I138 are linker 1. Positions E139–R230 are coil 1B. Residues G231–S250 are linker 12. The coil 2 stretch occupies residues R251 to D392. Residue K278 forms a Glycyl lysine isopeptide (Lys-Gly) (interchain with G-Cter in SUMO2) linkage. T279 carries the post-translational modification Phosphothreonine. At S323 the chain carries Phosphoserine. The interval A393–R432 is tail. Residues K399, K400, and K419 each participate in a glycyl lysine isopeptide (Lys-Gly) (interchain with G-Cter in SUMO1); alternate cross-link. Glycyl lysine isopeptide (Lys-Gly) (interchain with G-Cter in SUMO2); alternate cross-links involve residues K399, K400, and K419.

The protein belongs to the intermediate filament family. In terms of assembly, heterodimer of a type I and a type II keratin. KRT17 associates with KRT6 isomers (KRT6A or KRT6B). Interacts with TRADD and SFN. Phosphorylation at Ser-44 occurs in a growth- and stress-dependent fashion in skin keratinocytes, it has no effect on filament organization.

The protein localises to the cytoplasm. Type I keratin involved in the formation and maintenance of various skin appendages, specifically in determining shape and orientation of hair. Required for the correct growth of hair follicles, in particular for the persistence of the anagen (growth) state. Modulates the function of TNF-alpha in the specific context of hair cycling. Regulates protein synthesis and epithelial cell growth through binding to the adapter protein SFN and by stimulating Akt/mTOR pathway. Involved in tissue repair. May be a marker of basal cell differentiation in complex epithelia and therefore indicative of a certain type of epithelial 'stem cells'. Acts as a promoter of epithelial proliferation by acting a regulator of immune response in skin: promotes Th1/Th17-dominated immune environment contributing to the development of basaloid skin tumors. May act as an autoantigen in the immunopathogenesis of psoriasis, with certain peptide regions being a major target for autoreactive T-cells and hence causing their proliferation. The chain is Keratin, type I cytoskeletal 17 from Pan troglodytes (Chimpanzee).